Here is a 284-residue protein sequence, read N- to C-terminus: Tropomyosin, smooth muscle/fibroblast CTM1 (284 aa).

Residues 1-284 (MEAIKKKMTM…DVTLQGIGDL (284 aa)) adopt a coiled-coil conformation. Residues 18–38 (AIDRAEQAETDKKSAEDKATG) are disordered.

It belongs to the tropomyosin family. Homodimer. In terms of tissue distribution, predominantly expressed in body wall muscle and heart, low in intestine, ovary and larval tail muscle.

The function of tropomyosin in smooth muscle and non-muscle cells is not clear. This chain is Tropomyosin, smooth muscle/fibroblast CTM1 (CTM1), found in Ciona intestinalis (Transparent sea squirt).